Reading from the N-terminus, the 176-residue chain is Large ribosomal subunit protein uL6 (176 aa).

It belongs to the universal ribosomal protein uL6 family. Part of the 50S ribosomal subunit.

This protein binds to the 23S rRNA, and is important in its secondary structure. It is located near the subunit interface in the base of the L7/L12 stalk, and near the tRNA binding site of the peptidyltransferase center. The chain is Large ribosomal subunit protein uL6 from Shewanella sediminis (strain HAW-EB3).